A 316-amino-acid polypeptide reads, in one-letter code: Homoserine kinase (316 aa).

This sequence belongs to the pseudomonas-type ThrB family.

The enzyme catalyses L-homoserine + ATP = O-phospho-L-homoserine + ADP + H(+). The protein operates within amino-acid biosynthesis; L-threonine biosynthesis; L-threonine from L-aspartate: step 4/5. This is Homoserine kinase from Pseudomonas aeruginosa (strain LESB58).